We begin with the raw amino-acid sequence, 239 residues long: uncharacterized protein (239 aa).

Residues 129-155 form a disordered region; it reads DSLDDEDDNMISSNDPTKSPEEHDTTT. Ser-160 carries the phosphoserine modification.

This is an uncharacterized protein from Schizosaccharomyces pombe (strain 972 / ATCC 24843) (Fission yeast).